An 863-amino-acid polypeptide reads, in one-letter code: Protein translocase subunit SecA (863 aa).

Residues Gln88, Gly106–Thr110, and Asp507 each bind ATP. The disordered stretch occupies residues Lys806–Ala863. The segment covering Glu812–Ala829 has biased composition (polar residues). Residues Cys840, Cys842, Cys851, and His852 each contribute to the Zn(2+) site.

It belongs to the SecA family. Monomer and homodimer. Part of the essential Sec protein translocation apparatus which comprises SecA, SecYEG and auxiliary proteins SecDF-YajC and YidC. Zn(2+) serves as cofactor.

The protein localises to the cell inner membrane. It is found in the cytoplasm. The enzyme catalyses ATP + H2O + cellular proteinSide 1 = ADP + phosphate + cellular proteinSide 2.. Part of the Sec protein translocase complex. Interacts with the SecYEG preprotein conducting channel. Has a central role in coupling the hydrolysis of ATP to the transfer of proteins into and across the cell membrane, serving as an ATP-driven molecular motor driving the stepwise translocation of polypeptide chains across the membrane. The polypeptide is Protein translocase subunit SecA (Campylobacter lari (strain RM2100 / D67 / ATCC BAA-1060)).